A 346-amino-acid chain; its full sequence is uncharacterized protein (346 aa).

Positions 1 to 28 are cleaved as a signal peptide; that stretch reads MFEWMKNKKAISPILALLIVLGVTIVVG.

This is an uncharacterized protein from Methanocaldococcus jannaschii (strain ATCC 43067 / DSM 2661 / JAL-1 / JCM 10045 / NBRC 100440) (Methanococcus jannaschii).